The sequence spans 245 residues: MEGWQRAFVLHGRPWSETSLLLDLFSEQHGRVRVLAKGARAKRSSLKGALQPFTPLLVRWSGRGEVKTLRSAEPVSLALPLSGTTLYCGLYVNELLSRVLQHETAFSELFFDYLNCIQTLAADPPSPEPALRRFELSMLGHLGYGVDFLHCAGSGEEIADGMTYSYREEKGFIASLVTGHRSFTGRQLRALSTREFPDADTLRAAKRFTRIALKPWLGGKPLKSSELFRQFLPRKPANAAPADEE.

It belongs to the RecO family.

Its function is as follows. Involved in DNA repair and RecF pathway recombination. The protein is DNA repair protein RecO of Erwinia tasmaniensis (strain DSM 17950 / CFBP 7177 / CIP 109463 / NCPPB 4357 / Et1/99).